A 282-amino-acid chain; its full sequence is Undecaprenyl-diphosphatase (282 aa).

A run of 8 helical transmembrane segments spans residues 1-21 (MNLFQAIILGIIQGLTEFLPI), 40-60 (GAAFTAIIQIGTLAAVLIYFA), 89-109 (WMIAVGTIPIVVFGLTFKHEI), 112-132 (VLRSLYIVSASMIGLALVLVV), 153-173 (LSWTDAIIIGLAQAMALIPGS), 196-216 (FSFLLSLPSVFAAGMLELYQT), 228-248 (LNLAVATIAAFIFGYLSIAFL), and 258-278 (GIFIAYRLILGIGLIVMIGTG).

It belongs to the UppP family.

It localises to the cell inner membrane. The enzyme catalyses di-trans,octa-cis-undecaprenyl diphosphate + H2O = di-trans,octa-cis-undecaprenyl phosphate + phosphate + H(+). In terms of biological role, catalyzes the dephosphorylation of undecaprenyl diphosphate (UPP). Confers resistance to bacitracin. In Chlorobaculum tepidum (strain ATCC 49652 / DSM 12025 / NBRC 103806 / TLS) (Chlorobium tepidum), this protein is Undecaprenyl-diphosphatase.